The following is a 228-amino-acid chain: NAD(P)H-hydrate epimerase (228 aa).

The YjeF N-terminal domain maps to alanine 9–leucine 215. Asparagine 58 to aspartate 62 contributes to the (6S)-NADPHX binding site. The K(+) site is built by asparagine 59 and aspartate 123. Residues glycine 127 to proline 133 and aspartate 156 each bind (6S)-NADPHX. Residue serine 159 coordinates K(+).

Belongs to the NnrE/AIBP family. It depends on K(+) as a cofactor.

It carries out the reaction (6R)-NADHX = (6S)-NADHX. The enzyme catalyses (6R)-NADPHX = (6S)-NADPHX. Catalyzes the epimerization of the S- and R-forms of NAD(P)HX, a damaged form of NAD(P)H that is a result of enzymatic or heat-dependent hydration. This is a prerequisite for the S-specific NAD(P)H-hydrate dehydratase to allow the repair of both epimers of NAD(P)HX. The protein is NAD(P)H-hydrate epimerase of Anopheles darlingi (Mosquito).